The sequence spans 712 residues: Potassium transporter 1 (712 aa).

At methionine 1–threonine 19 the chain is on the cytoplasmic side. Residues leucine 20–leucine 40 form a helical membrane-spanning segment. Topologically, residues serine 41 to glycine 67 are extracellular. The helical transmembrane segment at valine 68–valine 88 threads the bilayer. Over leucine 89 to lysine 154 the chain is Cytoplasmic. Residues cysteine 155 to proline 175 form a helical membrane-spanning segment. The Extracellular portion of the chain corresponds to threonine 176–lysine 189. Residues isoleucine 190–phenylalanine 210 traverse the membrane as a helical segment. Residues serine 211–arginine 219 are Cytoplasmic-facing. A helical membrane pass occupies residues valine 220–valine 240. Topologically, residues tyrosine 241–glycine 267 are extracellular. A helical transmembrane segment spans residues valine 268–phenylalanine 288. Over alanine 289–lysine 300 the chain is Cytoplasmic. The chain crosses the membrane as a helical span at residues valine 301–phenylalanine 321. The Extracellular segment spans residues leucine 322–proline 340. The chain crosses the membrane as a helical span at residues valine 341–isoleucine 361. Over serine 362–glutamine 392 the chain is Cytoplasmic. A helical membrane pass occupies residues isoleucine 393–leucine 413. Topologically, residues arginine 414 to glycine 424 are extracellular. Residues leucine 425–valine 445 traverse the membrane as a helical segment. Over tryptophan 446 to arginine 449 the chain is Cytoplasmic. A helical membrane pass occupies residues isoleucine 450–serine 470. The Extracellular segment spans residues cysteine 471–lysine 474. Residues valine 475–isoleucine 495 form a helical membrane-spanning segment. Residues tryptophan 496–valine 712 lie on the Cytoplasmic side of the membrane.

It belongs to the HAK/KUP transporter (TC 2.A.72.3) family. Detected in the whole mature plant but preferentially expressed in roots and stems, and in potassium-starved plants.

It localises to the cell membrane. Functionally, high-affinity potassium transporter that could play a major role in the uptake of potassium from the rhizosphere. May act as a low-affinity potassium transporter under high potassium concentrations. Could also transport rubidium. This Arabidopsis thaliana (Mouse-ear cress) protein is Potassium transporter 1 (POT1).